A 129-amino-acid polypeptide reads, in one-letter code: Large ribosomal subunit protein uL22 (129 aa).

It belongs to the universal ribosomal protein uL22 family. As to quaternary structure, part of the 50S ribosomal subunit.

This protein binds specifically to 23S rRNA; its binding is stimulated by other ribosomal proteins, e.g. L4, L17, and L20. It is important during the early stages of 50S assembly. It makes multiple contacts with different domains of the 23S rRNA in the assembled 50S subunit and ribosome. Its function is as follows. The globular domain of the protein is located near the polypeptide exit tunnel on the outside of the subunit, while an extended beta-hairpin is found that lines the wall of the exit tunnel in the center of the 70S ribosome. The polypeptide is Large ribosomal subunit protein uL22 (Agrobacterium fabrum (strain C58 / ATCC 33970) (Agrobacterium tumefaciens (strain C58))).